The sequence spans 487 residues: MSSVRESSKDESIVHPPKAPESEPFPDGGARAWMVALGAGGVLFCTFGYVNAFGVYQDYYITHQLSNYSASDIAWIGSVQTFFLFGSGLVGGPLFDRYGAKVIWAPAVLVIFSVMMTSLCTKFYQFFLAQGILGGMSMGLSLAPALSSTAQYFQKKRAAAMGITIAGSSLGGVIFPIALEQMLYSSLGFAWAVRIVGFIILGVMSFAVLGIRARLPPKRQRFLKLEAFKKTHYVATLTAVFFLNVGIFTPFFYLPLYGQSHGMSTGLAFYLIAIQNASSFFGRLVPGVIADKIGPYNMLSTVSIITAIITFCWIRMTTNASIIVFSVLYGFFSGGIIGITPAAIANCAGHPQEIGTYIGMGMAVMSVATLIGPPINGALLNEYGGFLQVQIFSAAVMMFGGVLAFGAKMISFSGEGKGMRKFDHAVAGLAYYVREGGSRMEHIYFGSVAIVAGHLHGPVCAQNKRQMLVTGIGAEMVYVLEYFVEAG.

The segment covering 1 to 21 has biased composition (basic and acidic residues); the sequence is MSSVRESSKDESIVHPPKAPE. Residues 1-25 are disordered; it reads MSSVRESSKDESIVHPPKAPESEPF. The helical transmembrane segment at 35–55 threads the bilayer; sequence VALGAGGVLFCTFGYVNAFGV. N-linked (GlcNAc...) asparagine glycosylation is present at Asn67. 8 consecutive transmembrane segments (helical) span residues 75–95, 99–119, 126–146, 159–179, 191–211, 234–254, 262–282, and 293–313; these read WIGSVQTFFLFGSGLVGGPLF, GAKVIWAPAVLVIFSVMMTSL, FFLAQGILGGMSMGLSLAPAL, AAMGITIAGSSLGGVIFPIAL, WAVRIVGFIILGVMSFAVLGI, VATLTAVFFLNVGIFTPFFYL, GMSTGLAFYLIAIQNASSFFG, and IGPYNMLSTVSIITAIITFCW. The N-linked (GlcNAc...) asparagine glycan is linked to Asn319. A run of 3 helical transmembrane segments spans residues 322 to 342, 354 to 374, and 385 to 405; these read IIVFSVLYGFFSGGIIGITPA, IGTYIGMGMAVMSVATLIGPP, and GFLQVQIFSAAVMMFGGVLAF.

This sequence belongs to the major facilitator superfamily. Monocarboxylate porter (TC 2.A.1.13) family.

It localises to the cell membrane. In terms of biological role, efflux pump that may be involved in the secretion of aspyridones. This Emericella nidulans (strain FGSC A4 / ATCC 38163 / CBS 112.46 / NRRL 194 / M139) (Aspergillus nidulans) protein is Aspyridones efflux protein apdF.